Here is a 447-residue protein sequence, read N- to C-terminus: 2-oxoadipate dioxygenase/decarboxylase (447 aa).

Positions 68, 72, and 224 each coordinate 2-oxoadipate. H68 is a Fe(2+) binding site. Positions 224 and 290 each coordinate Fe(2+). Residue V391 participates in 2-oxoadipate binding.

Belongs to the 2-oxoadipate dioxygenase/decarboxylase family. Fe(2+) serves as cofactor.

It carries out the reaction 2-oxoadipate + O2 = (R)-2-hydroxyglutarate + CO2. Functionally, catalyzes the decarboxylation and hydroxylation of 2-oxoadipate (2OA) to form D-2-hydroxyglutarate (D-2-HGA). In Shigella flexneri, this protein is 2-oxoadipate dioxygenase/decarboxylase.